Here is a 260-residue protein sequence, read N- to C-terminus: Mitochondrial import inner membrane translocase subunit Tim29 (260 aa).

The N-terminal 31 residues, 1-31, are a transit peptide targeting the mitochondrion; that stretch reads MAAAALRRFWSRRRAEAGDAVVAKPGVWARL. Over 32 to 59 the chain is Mitochondrial matrix; sequence GSWARALLRDYAEACRDASAEARARPGR. A helical membrane pass occupies residues 60–77; the sequence is AAVYVGLLGGAAACFTLA. At 78-260 the chain is on the mitochondrial intermembrane side; that stretch reads PSEGAFEEAL…HSLVQAEAPR (183 aa).

As to quaternary structure, component of the TIM22 complex, which core is composed of TIMM22, associated with TIMM10 (TIMM10A and/or TIMM10B), TIMM9, AGK and TIMM29. Interacts with TIMM10B; the interaction is direct. Interacts with TOMM40; linking the TIM22 complex to the TOM complex. Interacts with TIMM22 (when oxidized); the interaction is direct.

Its subcellular location is the mitochondrion inner membrane. Functionally, component of the TIM22 complex, a complex that mediates the import and insertion of multi-pass transmembrane proteins into the mitochondrial inner membrane. The TIM22 complex forms a twin-pore translocase that uses the membrane potential as the external driving force. Required for the stability of the TIM22 complex and functions in the assembly of the TIMM22 protein into the TIM22 complex. May facilitate cooperation between TIM22 and TOM complexes by interacting with TOMM40. This chain is Mitochondrial import inner membrane translocase subunit Tim29, found in Homo sapiens (Human).